Reading from the N-terminus, the 389-residue chain is Na(+)/H(+) antiporter NhaA (389 aa).

The next 11 helical transmembrane spans lie at 14–34 (AGGILLLVAVALAMLMANSPL), 59–79 (LILWINDGLMAVFFLLIGLEV), 95–115 (SLPTFAAIGGMLVPAGVYLLF), 124–144 (AGWAIPAATDIAFALGIMALL), 154–174 (VFLLALAIIDDLGVIVIIALF), 177–197 (TDLSTISLVIASLAIAGLVGL), 213–233 (LILWVAVLKSGVHATLAGVII), 257–277 (PWSTFFILPVFAFANAGVYVG), 292–312 (IALGLMLGKPIGVMVFSYIAV), 328–348 (IAPVAAMCGIGFTMSMFIASL), and 363–383 (LGTLIGSIMAALVGYFWLSKV).

Belongs to the NhaA Na(+)/H(+) (TC 2.A.33) antiporter family.

It localises to the cell inner membrane. The enzyme catalyses Na(+)(in) + 2 H(+)(out) = Na(+)(out) + 2 H(+)(in). In terms of biological role, na(+)/H(+) antiporter that extrudes sodium in exchange for external protons. The chain is Na(+)/H(+) antiporter NhaA from Shewanella baltica (strain OS223).